Consider the following 89-residue polypeptide: Elongation factor 1-beta (89 aa).

It belongs to the EF-1-beta/EF-1-delta family.

Its function is as follows. Promotes the exchange of GDP for GTP in EF-1-alpha/GDP, thus allowing the regeneration of EF-1-alpha/GTP that could then be used to form the ternary complex EF-1-alpha/GTP/AAtRNA. The sequence is that of Elongation factor 1-beta (ef1b) from Methanothermobacter thermautotrophicus (strain ATCC 29096 / DSM 1053 / JCM 10044 / NBRC 100330 / Delta H) (Methanobacterium thermoautotrophicum).